The chain runs to 425 residues: Serine--tRNA ligase (425 aa).

Residue 230-232 (TAE) participates in L-serine binding. ATP is bound at residue 261-263 (RSE). Residue Glu284 participates in L-serine binding. Position 348 to 351 (348 to 351 (EISS)) interacts with ATP. Ser384 lines the L-serine pocket.

It belongs to the class-II aminoacyl-tRNA synthetase family. Type-1 seryl-tRNA synthetase subfamily. Homodimer. The tRNA molecule binds across the dimer.

It is found in the cytoplasm. The enzyme catalyses tRNA(Ser) + L-serine + ATP = L-seryl-tRNA(Ser) + AMP + diphosphate + H(+). It catalyses the reaction tRNA(Sec) + L-serine + ATP = L-seryl-tRNA(Sec) + AMP + diphosphate + H(+). Its pathway is aminoacyl-tRNA biosynthesis; selenocysteinyl-tRNA(Sec) biosynthesis; L-seryl-tRNA(Sec) from L-serine and tRNA(Sec): step 1/1. Its function is as follows. Catalyzes the attachment of serine to tRNA(Ser). Is also able to aminoacylate tRNA(Sec) with serine, to form the misacylated tRNA L-seryl-tRNA(Sec), which will be further converted into selenocysteinyl-tRNA(Sec). This is Serine--tRNA ligase from Streptococcus equi subsp. zooepidemicus (strain H70).